A 279-amino-acid polypeptide reads, in one-letter code: MALKSYKPTTPGQRGLVLIDRSELWKGRPVKTLVEGLIKTGGRNNTGRVTMWHKGGGAKRLYRIVDFKRRKFDVPAVVERIEYDPNRTAFIALVRYEDGELAYILAPQRLAVGDSVVAGVKTDVKPGNAMPFSGMPIGTIVHNVELKPGKGGQLARAAGTYAQFVGRDGGYAQIRLSSGELRMVRQECMATVGAVSNPDNSNQNFGKAGRMRHKGVRPTVRGVAMNPIDHPHGGGEGRTSGGRHPVTPWGKGTKGNRTRKSKASDKLIVRSRHAKKKGR.

The interval 224 to 279 is disordered; sequence AMNPIDHPHGGGEGRTSGGRHPVTPWGKGTKGNRTRKSKASDKLIVRSRHAKKKGR. Residues 269-279 are compositionally biased toward basic residues; the sequence is VRSRHAKKKGR.

The protein belongs to the universal ribosomal protein uL2 family. As to quaternary structure, part of the 50S ribosomal subunit. Forms a bridge to the 30S subunit in the 70S ribosome.

Functionally, one of the primary rRNA binding proteins. Required for association of the 30S and 50S subunits to form the 70S ribosome, for tRNA binding and peptide bond formation. It has been suggested to have peptidyltransferase activity; this is somewhat controversial. Makes several contacts with the 16S rRNA in the 70S ribosome. This Cereibacter sphaeroides (strain ATCC 17029 / ATH 2.4.9) (Rhodobacter sphaeroides) protein is Large ribosomal subunit protein uL2.